The sequence spans 287 residues: Isopentenyl-diphosphate Delta-isomerase 1, chloroplastic (287 aa).

The N-terminal 51 residues, 1-51 (MTLLLNTTAKLYIAPRTLPFTSSSTFARSPFLRIPSLLKPLSPLTARVSLS), are a transit peptide targeting the chloroplast. K90 lines the substrate pocket. Residues H94 and H106 each coordinate Mg(2+). One can recognise a Nudix hydrolase domain in the interval 104 to 256 (LLHRAFSVFL…GLKLSPWFRL (153 aa)). Substrate contacts are provided by R125 and K129. Residue C141 is part of the active site. Substrate is bound at residue S142. Positions 142–172 (SHPLYRESELIDEESLGARNAAQRKLLDELG) match the Nudix box motif. Positions 201 and 203 each coordinate Mg(2+). Residue E203 is part of the active site.

Belongs to the IPP isomerase type 1 family. Monomer. Mg(2+) is required as a cofactor. As to expression, mainly expressed in roots and trichomes and, to a lower extent, in leaves, flowers and stems.

The protein resides in the plastid. Its subcellular location is the chloroplast. It catalyses the reaction isopentenyl diphosphate = dimethylallyl diphosphate. It participates in isoprenoid biosynthesis; dimethylallyl diphosphate biosynthesis; dimethylallyl diphosphate from isopentenyl diphosphate: step 1/1. It functions in the pathway porphyrin-containing compound metabolism; chlorophyll biosynthesis. Its function is as follows. Catalyzes the 1,3-allylic rearrangement of the homoallylic substrate isopentenyl (IPP) to its highly electrophilic allylic isomer, dimethylallyl diphosphate (DMAPP). The protein is Isopentenyl-diphosphate Delta-isomerase 1, chloroplastic of Cannabis sativa (Hemp).